The chain runs to 29 residues: Cyclotide psyleio A (29 aa).

The cyclopeptide (Gly-Asp) cross-link spans 1 to 29 (GLPICGETCFTGTCNTPGCSCTYPICTRD). Disulfide bonds link Cys5–Cys19, Cys9–Cys21, and Cys14–Cys26.

Post-translationally, this is a cyclic peptide.

Probably participates in a plant defense mechanism. The protein is Cyclotide psyleio A of Psychotria brachyceras.